The sequence spans 261 residues: MTGNEQKFSLQGKVAIVTGAGSGIGRETALCLANAGANVVVAEANETTGKETAAKVSAQTGSRGLFILTDVSRSESVQAMVIATIEAFGRLDIAVNNAALHPDASPIAELHEDHWQKIIGVNLVGVAFCLKWELQQMIQQGGGGSIINISSATINRPQEKMSAYIAAKHGITGLTQTAAVENGRHGIRVNALAPGGVATDLTMATMQELGLTEENEAARSSLFKRFAKPEEIAQSVLWLASDAASYVTGATIAVDSGLSLI.

Positions 24, 70, 97, and 131 each coordinate NADP(+). Catalysis depends on proton donor residues Ser-150 and Tyr-164. NADP(+)-binding residues include Tyr-164, Lys-168, Val-197, and Thr-199. The Lowers pKa of active site Tyr role is filled by Lys-168.

This sequence belongs to the short-chain dehydrogenases/reductases (SDR) family.

It functions in the pathway secondary metabolite biosynthesis; terpenoid biosynthesis. Short chain dehydrogenase/reductase; part of the gene cluster that mediates the biosynthesis of astellolides, drimane-type sesquiterpene esters that show antimicrobial, anti-inflammatory, and anti-tumor activities. The first step in astellolide biosynthesis is performed by the sesquiterpene cyclase astC that catalyzes the formation of drimanyl pyrophosphate from farnesyl pyrophosphate. Drimanyl pyrophosphate is then dephosphorylated by the sesquiterpene phosphatase astI to produce drimanyl monophosphate which is further dephosphorylated to drim-8-ene-11-ol by atsK. Drim-8-ene-11-ol is converted to confertifolin, probably by the cytochrome P450 monooxygenase astD and/or the dehydrogenase astE. The cytochrome P450 monooxygenases astB, astF and astJ then hydroxylate confertifolin at C6, C14, or C15 to form trihydroxy confertifolin. The nonribosomal peptide synthetase astA catalyzes ester bond formation between trihydroxy contifolin and benzoic acid (BA) or 4-hydroxy benzoic acid (4HBA), leading to the formation of dideacetyl astellolides A and B, respectively. Finally, the O-acetyltransferase astG converts dideacetyl astellolides A and B into deacetyl astellolides A and B. The sequence is that of Short chain dehydrogenase/reductase astE from Aspergillus oryzae (strain ATCC 42149 / RIB 40) (Yellow koji mold).